A 208-amino-acid polypeptide reads, in one-letter code: Meiotically up-regulated gene 9 protein (208 aa).

The tract at residues 77–114 (VPASNEKAARVSNLKTVPSLKRENKEVNANSKPPVKQQ) is disordered.

In terms of biological role, has a role in meiosis. This Schizosaccharomyces pombe (strain 972 / ATCC 24843) (Fission yeast) protein is Meiotically up-regulated gene 9 protein (mug9).